The primary structure comprises 6548 residues: Epiplakin (6548 aa).

Thr-33 bears the Phosphothreonine mark. 9 Plectin repeats span residues 41–78 (AALP…TGLG), 79–116 (LTLL…LELK), 117–154 (EKLL…RTLG), 155–192 (WRLL…KETW), 285–322 (RRYL…KGIA), 323–360 (LQLL…PELH), 362–398 (QLLV…QPLA), 399–436 (LRLL…EETR), and 437–470 (QRLS…PETG). Residues 49–1123 (SIAGVYVEAS…KASGLHLLPL (1075 aa)) form an interaction with KRT5 region. The stretch at 545-565 (SVEELAAELKNIVEQAAATAK) forms a coiled coil. Plectin repeat units follow at residues 611–648 (QRYL…PGTA), 649–686 (LILL…PDVY), 687–724 (AKLL…RDHG), 725–762 (IRLL…QILN), and 766–800 (LDPS…SETG). Residues 851–886 (TEDRRRQLLQRYRQRKITLEQVTQLLEKEMRRWTDI) adopt a coiled-coil conformation. Plectin repeat units lie at residues 931–968 (HRYL…PSTA), 969–1006 (LALL…AEVY), 1007–1044 (GKLK…VEQA), 1224–1284 (QETL…TGLG), 1285–1322 (QQLL…MEQS), 1323–1360 (EHLR…QSEA), 1361–1398 (FPLL…EQTS), and 1402–1436 (TATG…ADTG). Phosphothreonine is present on Thr-1551. Plectin repeat units follow at residues 1572-1609 (RRSL…PGTA), 1610-1647 (LVLL…KETY), 1648-1685 (MKLL…RDHG), 1686-1723 (IRLL…EEMN), and 1727-1761 (SDPS…PETG). The interaction with KRT5 stretch occupies residues 1580-6545 (FIAGVLIQDT…PETGLLFLSL (4966 aa)). Residues 1819–1851 (RKLLREYRAQNIGLENLLEVITSTVEETEKQSQ) are a coiled coil. Plectin repeat units lie at residues 1898–1935 (RVYL…AGFA), 1936–1973 (AQML…EDLR), 1974–2011 (ERLV…REEA), 2012–2049 (LRLL…DDSL), 2225–2267 (KRYL…PGTA), 2268–2305 (LVLL…GEIQ), 2306–2343 (EKLL…RDHG), 2344–2381 (IRLL…EDMN), and 2385–2419 (ADPG…PETG). Ser-2430 and Ser-2508 each carry phosphoserine. The disordered stretch occupies residues 2578 to 2626 (AEETQESKPKPRDASLKQQDTGARGSGTSPDEGDAQDSSESARQQQEQT). Positions 2582 to 2592 (QESKPKPRDAS) are enriched in basic and acidic residues. 2 stretches are compositionally biased toward polar residues: residues 2593–2606 (LKQQ…SGTS) and 2615–2626 (SSESARQQQEQT). Plectin repeat units lie at residues 2740 to 2782 (KRYL…PGTA), 2783 to 2820 (LVLL…GEIQ), 2821 to 2858 (EKLL…RDHG), 2859 to 2896 (IRLL…EDMN), and 2900 to 2934 (ADPG…PETG). The tract at residues 2748-2940 (CIAGVLVPVQ…PETGFYMLQL (193 aa)) is interaction with KRT14. A disordered region spans residues 3093–3144 (AEETQESKPKPRDASLKQQDTGARGSGTSPDEGDAQDSSESARQQQEQTLRA). Basic and acidic residues predominate over residues 3097 to 3107 (QESKPKPRDAS). Composition is skewed to polar residues over residues 3108-3121 (LKQQ…SGTS) and 3130-3144 (SSES…TLRA). Ser-3220 carries the phosphoserine modification. Plectin repeat units follow at residues 3255 to 3297 (KRYL…PGTA), 3298 to 3335 (LVLL…GEIQ), 3336 to 3373 (EKLL…RDHG), 3374 to 3411 (IRLL…EDMN), and 3415 to 3449 (ADPG…PETG). A phosphoserine mark is found at Ser-3460 and Ser-3538. The tract at residues 3608 to 3659 (AEETQESKPKPRDASLKQQDTGARGSGTSPDEGDAQDSSESARQQQEQTLRA) is disordered. Residues 3612–3622 (QESKPKPRDAS) show a composition bias toward basic and acidic residues. Polar residues-rich tracts occupy residues 3623-3636 (LKQQ…SGTS) and 3645-3659 (SSES…TLRA). Ser-3735 is modified (phosphoserine). Plectin repeat units follow at residues 3770–3812 (KRYL…PGTA), 3813–3850 (LVLL…GEIQ), 3851–3888 (EKLL…RDHG), 3889–3926 (IRLL…EDMN), and 3930–3964 (ADPG…PETG). Ser-3975 and Ser-4053 each carry phosphoserine. Residues 4123–4174 (AEETQESKPKPRDASLKQQDTGARGSGTSPDEGDAQDSSESARQQQEQTLRA) are disordered. The span at 4127 to 4137 (QESKPKPRDAS) shows a compositional bias: basic and acidic residues. 2 stretches are compositionally biased toward polar residues: residues 4138-4151 (LKQQ…SGTS) and 4160-4174 (SSES…TLRA). Plectin repeat units lie at residues 4285–4327 (KRYL…PGTA), 4328–4365 (LVLL…GEIQ), 4366–4403 (EKLL…RDHG), 4404–4441 (IRLL…EDMN), and 4445–4479 (ADPG…PETG). The disordered stretch occupies residues 4638 to 4689 (AEETQESKPKPRDASLKQQDTGARGSGTSPDEGDAQDSSESARQQQEQTLRA). A compositionally biased stretch (basic and acidic residues) spans 4642-4652 (QESKPKPRDAS). Polar residues-rich tracts occupy residues 4653–4666 (LKQQ…SGTS) and 4675–4689 (SSES…TLRA). The residue at position 4765 (Ser-4765) is a Phosphoserine. 5 Plectin repeats span residues 4800–4842 (KRYL…PGTA), 4843–4880 (LVLL…GEIQ), 4881–4918 (EKLL…RDHG), 4919–4956 (IRLL…EDMN), and 4960–4994 (ADPG…PETG). Phosphoserine occurs at positions 5005 and 5083. Residues 5153 to 5204 (AEETQESKPKPRDASLKQQDTGARGSGTSPDEGDAQDSSESARQQQEQTLRA) are disordered. Positions 5157-5167 (QESKPKPRDAS) are enriched in basic and acidic residues. Polar residues-rich tracts occupy residues 5168 to 5181 (LKQQ…SGTS) and 5190 to 5204 (SSES…TLRA). Plectin repeat units lie at residues 5315–5357 (KRYL…PGTA), 5358–5395 (LVLL…GEIQ), 5396–5433 (EKLL…RDHG), 5434–5471 (IRLL…EDMN), and 5475–5509 (ADPG…PETG). Positions 5668–5719 (AEETQESKPKPRDASLKQQDTGARGSGTSPDEGDAQDSSESARQQQEQTLRA) are disordered. Residues 5672-5682 (QESKPKPRDAS) are compositionally biased toward basic and acidic residues. Composition is skewed to polar residues over residues 5683-5696 (LKQQ…SGTS) and 5705-5719 (SSES…TLRA). Residue Ser-5795 is modified to Phosphoserine. 5 Plectin repeats span residues 5830–5872 (KRYL…PGTA), 5873–5910 (LVLL…GEIQ), 5911–5948 (EKLL…RDHG), 5949–5986 (IRLL…EDMN), and 5990–6024 (ADPG…PETG). Residues Ser-6035 and Ser-6113 each carry the phosphoserine modification. A disordered region spans residues 6183-6234 (AEETQESKPKPRDASLKQQDTGARGSGTSPDEGDAQDSSESARQQQEQTLRA). Over residues 6187 to 6197 (QESKPKPRDAS) the composition is skewed to basic and acidic residues. 2 stretches are compositionally biased toward polar residues: residues 6198 to 6211 (LKQQ…SGTS) and 6220 to 6234 (SSES…TLRA). Ser-6310 bears the Phosphoserine mark. 5 Plectin repeats span residues 6345–6387 (KRYL…PGTA), 6388–6425 (LVLL…GEIQ), 6426–6463 (EKLL…KNHG), 6464–6501 (IRLL…QEMN), and 6505–6539 (ADPG…PETG).

The protein belongs to the plakin or cytolinker family. In terms of assembly, interacts with KRT5, KRT14 and KRT5/KRT14 heterotetramer; interacts preferentially with assembled filaments rather than keratin monomers. Interacts with KRT8 and KRT18 and KRT8/KRT18 heterotetramer; interacts preferentially with assembled filaments rather than keratin monomers. Interacts with KRT1, VIM and DES; interaction is stronger with KRT1 than with VIM or DES; interaction is dependent of higher-order structure of intermediate filament. As to expression, high levels in skin, small intestine and salivary gland. Lower levels in lung, uterus and liver. Not detected in brain, kidney, muscle, heart or spleen. In skin, expressed in all epidermal layers but not in the dermis. In intestine, expressed exclusively in the epithelial cell layer of the villi. In liver, expressed at hepatocyte margins. Around the region of the wound, expressed in the upper half of the epidermis. Weakly expressed on the basilar side of the suprabasal layer of the epidermis at the wound's edge. Expressed strongly in the upper layer of the epidermis, especially in larger keratinocytes. Expressed in undifferentiated primary keratinocytes. Strongly expressed in ductal cells, and also expressed in acinar cells. Expressed in hepatocytes and cholangiocytes.

It localises to the cytoplasm. It is found in the cytoskeleton. Its subcellular location is the apicolateral cell membrane. The protein localises to the basolateral cell membrane. The protein resides in the cell junction. It localises to the hemidesmosome. It is found in the tight junction. Its subcellular location is the cell projection. Cytoskeletal linker protein that connects to intermediate filaments and controls their reorganization in response to stress. In response to mechanical stress like wound healing, is associated with the machinery for cellular motility by slowing down keratinocyte migration and proliferation and accelerating keratin bundling in proliferating keratinocytes thus contributing to tissue architecture. However in wound healing in corneal epithelium also positively regulates cell differentiation and proliferation and negatively regulates migration thereby controlling corneal epithelium morphogenesis and integrity. In response to cellular stress, plays a role in keratin filament reorganization, probably by protecting keratin filaments against disruption. During liver and pancreas injuries, plays a protective role by chaperoning disease-induced intermediate filament reorganization. The protein is Epiplakin of Mus musculus (Mouse).